A 278-amino-acid polypeptide reads, in one-letter code: MSVPTVLEKIIARKLEEVAERSRRIGLAELEQQAAIADPVRGFAAALEQRVNAKEPAVIAEVKKASPSKGVIRDPFLPAEIAAGYEAGGAACLSVLTDIDFFQGADAYLQQARAACSLPVIRKDFMIDPYQVVEARALGADCILLIVAALDDARMHELAAVAKAHGLDVLVEVHDGDELERALRLETPLVGINNRNLHTFEVSLETTLDLLPRVPKDRLVITESGILNRADVELMEINQVYAFLVGEAFMRAEQPGVELQRLFFPDRARSRGVVADPE.

Belongs to the TrpC family.

It catalyses the reaction 1-(2-carboxyphenylamino)-1-deoxy-D-ribulose 5-phosphate + H(+) = (1S,2R)-1-C-(indol-3-yl)glycerol 3-phosphate + CO2 + H2O. It functions in the pathway amino-acid biosynthesis; L-tryptophan biosynthesis; L-tryptophan from chorismate: step 4/5. This Stutzerimonas stutzeri (strain A1501) (Pseudomonas stutzeri) protein is Indole-3-glycerol phosphate synthase.